A 180-amino-acid polypeptide reads, in one-letter code: MNTRLEKFYKDNVVPALMKEFGYTNPMEVPKLVKVTLNMGVGEAATNKKILENAVADMAKISGQKPVVTKSRVSVASFKIRDGWPIGCKTTLRRAKMYEFLDRLINISLPRVRDFRGVSGRSFDGRGNFNMGVKEQIIFPEIDFDAVDAIRGMDIAITTTAKTDAEAKALLAAFKFPFRN.

It belongs to the universal ribosomal protein uL5 family. Part of the 50S ribosomal subunit; part of the 5S rRNA/L5/L18/L25 subcomplex. Contacts the 5S rRNA and the P site tRNA. Forms a bridge to the 30S subunit in the 70S ribosome.

Its function is as follows. This is one of the proteins that bind and probably mediate the attachment of the 5S RNA into the large ribosomal subunit, where it forms part of the central protuberance. In the 70S ribosome it contacts protein S13 of the 30S subunit (bridge B1b), connecting the 2 subunits; this bridge is implicated in subunit movement. Contacts the P site tRNA; the 5S rRNA and some of its associated proteins might help stabilize positioning of ribosome-bound tRNAs. The sequence is that of Large ribosomal subunit protein uL5 from Xanthomonas axonopodis pv. citri (strain 306).